Here is a 430-residue protein sequence, read N- to C-terminus: Trigger factor (430 aa).

Residues 163 to 248 (GNIAIIDFKG…IKDIKVKELP (86 aa)) enclose the PPIase FKBP-type domain.

It belongs to the FKBP-type PPIase family. Tig subfamily.

It localises to the cytoplasm. The enzyme catalyses [protein]-peptidylproline (omega=180) = [protein]-peptidylproline (omega=0). Functionally, involved in protein export. Acts as a chaperone by maintaining the newly synthesized protein in an open conformation. Functions as a peptidyl-prolyl cis-trans isomerase. The sequence is that of Trigger factor from Clostridium botulinum (strain ATCC 19397 / Type A).